The chain runs to 708 residues: Radial spoke head protein 6 homolog A (708 aa).

Disordered regions lie at residues 1–94 (MGEP…GYTP), 376–407 (ETHG…IIPK), 495–514 (EEEG…FEEN), and 663–708 (GPEI…DLED). Over residues 10–32 (PSQTRRASQGSERARSQEYSQPL) the composition is skewed to polar residues. A compositionally biased stretch (low complexity) spans 47–56 (RGSRSSQGSQ). Residues 495-504 (EEEGDEEEEG) show a composition bias toward acidic residues. The span at 680–690 (LKAAQEQALAA) shows a compositional bias: low complexity. Residues 691–708 (AEEEEEDEEEEEDEDLED) show a composition bias toward acidic residues.

The protein belongs to the flagellar radial spoke RSP4/6 family. In terms of assembly, component of the axonemal radial spoke 1 (RS1) and 2 (RS2) complexes, at least composed of spoke head proteins RSPH1, RSPH3, RSPH9 and the cilia-specific component RSPH4A or sperm-specific component RSPH6A, spoke stalk proteins RSPH14, DNAJB13, DYDC1, ROPN1L and NME5, and the RS1 complex-specific anchor protein IQUB. Interacts with RSPH1. Interacts with RSPH3B. Interacts with RSPH4A. Interacts with RSPH9. Interacts with RSPH10B. Post-translationally, phosphorylated by PKA. Phosphorylation increases in capacitated sperm. In terms of tissue distribution, expressed in sperm and testis (at protein level).

The protein resides in the cytoplasm. It is found in the cytoskeleton. Its subcellular location is the flagellum axoneme. Functionally, functions as part of radial spoke complexes in the axoneme of sperm flagella that play an important part in motility. The triple radial spokes (RS1, RS2 and RS3) are required to modulate beating of the sperm flagellum. The sequence is that of Radial spoke head protein 6 homolog A from Mus musculus (Mouse).